The sequence spans 496 residues: Hemophilin secretion modulator (496 aa).

An N-terminal signal peptide occupies residues 1-19 (MKRTLLCCLTLLSCPFLYA). Beta stranded transmembrane passes span 198–208 (WQGSVSAGYTY), 253–263 (DYEASLIKRYA), 268–277 (HGVALRALAF), 291–301 (TININAGYSYF), 305–315 (NQIGVSPLFEH), 327–337 (WGARAEWMHFI), 341–351 (KAFKLEAESKD), 365–374 (SSAFATFWKI), 380–389 (TFFGGLDVLD), 403–413 (QGVRLGLSKSW), 418–427 (NTTLLSSYRW), 446–455 (QNHTFVVQMP), 462–472 (MTPNLTYRYNH), and 486–495 (HNISFKLEHR).

Belongs to the Slam family.

Its subcellular location is the cell outer membrane. In terms of biological role, part of a high affinity heme acquisition system. Mediates the secretion of the hemophilin HphA across the outer membrane into the extracellular environment. Plays a supporting role for full virulence. The protein is Hemophilin secretion modulator of Acinetobacter baumannii.